The sequence spans 122 residues: Large ribosomal subunit protein uL24 (122 aa).

Belongs to the universal ribosomal protein uL24 family. In terms of assembly, part of the 50S ribosomal subunit.

Functionally, one of two assembly initiator proteins, it binds directly to the 5'-end of the 23S rRNA, where it nucleates assembly of the 50S subunit. In terms of biological role, located at the polypeptide exit tunnel on the outside of the subunit. The sequence is that of Large ribosomal subunit protein uL24 from Pyrobaculum arsenaticum (strain DSM 13514 / JCM 11321 / PZ6).